Consider the following 702-residue polypeptide: Ribosomal RNA large subunit methyltransferase K/L (702 aa).

One can recognise a THUMP domain in the interval 43–154 (LIYQSLMWSR…KETASIALDL (112 aa)).

Belongs to the methyltransferase superfamily. RlmKL family.

The protein localises to the cytoplasm. The catalysed reaction is guanosine(2445) in 23S rRNA + S-adenosyl-L-methionine = N(2)-methylguanosine(2445) in 23S rRNA + S-adenosyl-L-homocysteine + H(+). It catalyses the reaction guanosine(2069) in 23S rRNA + S-adenosyl-L-methionine = N(2)-methylguanosine(2069) in 23S rRNA + S-adenosyl-L-homocysteine + H(+). In terms of biological role, specifically methylates the guanine in position 2445 (m2G2445) and the guanine in position 2069 (m7G2069) of 23S rRNA. This Salmonella arizonae (strain ATCC BAA-731 / CDC346-86 / RSK2980) protein is Ribosomal RNA large subunit methyltransferase K/L.